The primary structure comprises 178 residues: MISIYLFMAFFIANLLGYGGGPASIPLMFEEVVNRYSWLSNDQFSNMLALANALPGPIATKIAAYVGYSAGGWPGFLIALIATVVPSALALIVLLRIIQRFRQSPVIKGMTLSVQPVIAVMMLILTWQIGADGIKAIGWVQSIVITGISLLAMTKFKMHPAFLIIAAFLYGGLVIPYL.

Helical transmembrane passes span 1 to 21, 47 to 67, 75 to 95, 117 to 137, and 158 to 178; these read MISI…YGGG, MLAL…AYVG, GFLI…IVLL, VIAV…IKAI, and MHPA…IPYL.

This sequence belongs to the chromate ion transporter (CHR) (TC 2.A.51) family.

The protein resides in the cell membrane. This is an uncharacterized protein from Bacillus subtilis (strain 168).